The primary structure comprises 115 residues: NADH-ubiquinone oxidoreductase chain 3 (115 aa).

3 helical membrane passes run 3 to 23 (LMAT…IAFW), 55 to 75 (FFLV…LLPL), and 86 to 106 (LTLL…AYEW).

Belongs to the complex I subunit 3 family. Core subunit of respiratory chain NADH dehydrogenase (Complex I) which is composed of 45 different subunits. Interacts with TMEM186. Interacts with TMEM242.

The protein resides in the mitochondrion inner membrane. It carries out the reaction a ubiquinone + NADH + 5 H(+)(in) = a ubiquinol + NAD(+) + 4 H(+)(out). Core subunit of the mitochondrial membrane respiratory chain NADH dehydrogenase (Complex I) which catalyzes electron transfer from NADH through the respiratory chain, using ubiquinone as an electron acceptor. Essential for the catalytic activity of complex I. The polypeptide is NADH-ubiquinone oxidoreductase chain 3 (Mammuthus primigenius (Siberian woolly mammoth)).